The sequence spans 653 residues: Protein CBFA2T3 (653 aa).

Residues 1–10 (MPASRLRDRA) are compositionally biased toward basic and acidic residues. The tract at residues 1 to 109 (MPASRLRDRA…HTHREDGPAT (109 aa)) is disordered. The tract at residues 1 to 127 (MPASRLRDRA…CLKWSMVCLL (127 aa)) is required for nucleolar targeting (in isoform 1). A mediates interaction with PDE7A (in isoform 2) region spans residues 1 to 430 (MPASRLRDRA…RRCQEADREE (430 aa)). The tract at residues 1-435 (MPASRLRDRA…ADREELNHWA (435 aa)) is mediates localization to the nucleus. A compositionally biased stretch (low complexity) spans 11-23 (ASSASGSTCGSMS). Over residues 75-86 (STPPSMPPPPPA) the composition is skewed to pro residues. The interval 145 to 242 (PNGFSNGPAT…IPFLKANLPL (98 aa)) is interaction with ZBTB33. The TAFH domain maps to 171-266 (ARQLSKLKRF…TPAQYLAQHE (96 aa)). The segment at 176–268 (KLKRFLTTLQ…AQYLAQHEQL (93 aa)) is interaction with HIF1A. Residues 284–342 (LLEVNENGKRRTPDRTKENGSDRDPLHPEHLSKRPCTLNPAQRYSPSNGPPQPTPPPHY) form a disordered region. The segment covering 289 to 315 (ENGKRRTPDRTKENGSDRDPLHPEHLS) has biased composition (basic and acidic residues). Pro residues predominate over residues 331–341 (NGPPQPTPPPH). The nervy homology region 2 (NHR2); essential for down-regulation of PFKFB3, PFKFB4 and PDK1 expression stretch occupies residues 394–412 (EEWKHLNNLLNCIMDMVEK). The segment covering 434–446 (WARRYSDAEDTKK) has biased composition (basic and acidic residues). Positions 434 to 472 (WARRYSDAEDTKKGPAPAAARPRSSSAGPEGPQLDVPRE) are disordered. Residues 447–462 (GPAPAAARPRSSSAGP) show a composition bias toward low complexity. Residues serine 457 and serine 459 each carry the phosphoserine modification. Threonine 479 carries the phosphothreonine modification. The interval 485–506 (DIWRKAEEAVNEVKRQAMSELQ) is mediates interaction with PRKAR2A. Positions 485–533 (DIWRKAEEAVNEVKRQAMSELQKAVSDAERKAHELITTERAKMERALAE) are nervy homology region 3 (NHR3); essential for down-regulation of PFKFB3, PFKFB4 and PDK1 expression. The stretch at 488–543 (RKAEEAVNEVKRQAMSELQKAVSDAERKAHELITTERAKMERALAEAKRQASEDAL) forms a coiled coil. 8 residues coordinate Zn(2+): cysteine 556, cysteine 559, cysteine 567, cysteine 570, cysteine 576, cysteine 580, histidine 588, and cysteine 592. The segment at 556-592 (CWNCGRKASETCSGCNAARYCGSFCQHRDWEKHHHVC) adopts an MYND-type zinc-finger fold. Positions 603-653 (VADPVPGPPEAAHSLGPSLPVGAASPSEAGSAGPSRPGSPSPPGPLDTVPR) are disordered. A compositionally biased stretch (low complexity) spans 622–638 (PVGAASPSEAGSAGPSR). 2 positions are modified to phosphoserine: serine 637 and serine 641. Phosphothreonine is present on threonine 650.

The protein belongs to the CBFA2T family. Homooligomer. Homotetramerization is mediated by nervy homology region 2 (NRH2). Can interact with RUNX1T1 and CBFA2T2; heterotetramerization between members of the CBFA2T family is proposed. Component of a TAL-1 complex composed at least of CBFA2T3, LDB1, TAL1 and TCF3. Interacts with ERBB4, HDAC1, HDAC2, HDAC3, HDAC6, HDAC8, NCOR1, NCOR2, and ZNF652. According to PubMed:12242670, may not interact with HDAC6. Interacts with PLXNA1, PLXNA3 and PRKAR1A. Isoform 2 interacts with PRKAR2A, PDE7A and probably PDE4A. Interacts with ZBTB4, ZBTB38 and ZBTB33. Interacts with HIF1A and EGLN1. Interacts with the AML1-MTG8/ETO fusion protein. As to expression, widely expressed with higher expression in heart, pancreas, skeletal muscle, spleen, thymus and peripheral blood leukocytes. Expressed in hematopoietic cells (at protein level).

The protein resides in the nucleus. Its subcellular location is the nucleolus. It localises to the nucleoplasm. The protein localises to the golgi apparatus membrane. In terms of biological role, transcriptional corepressor which facilitates transcriptional repression via its association with DNA-binding transcription factors and recruitment of other corepressors and histone-modifying enzymes. Can repress the expression of MMP7 in a ZBTB33-dependent manner. Reduces the protein levels and stability of the transcriptinal regulator HIF1A; interacts with EGLN1 and promotes the HIF1A prolyl hydroxylation-dependent ubiquitination and proteasomal degradation pathway. Contributes to inhibition of glycolysis and stimulation of mitochondrial respiration by down-regulating the expression of glycolytic genes including PFKFB3, PFKFB4, PDK1, PFKP, LDHA and HK1 which are direct targets of HIF1A. Regulates the proliferation and the differentiation of erythroid progenitors by repressing the expression of TAL1 target genes. Plays a role in granulocyte differentiation. Isoform 2 functions as an A-kinase-anchoring protein. This Homo sapiens (Human) protein is Protein CBFA2T3 (CBFA2T3).